Here is a 504-residue protein sequence, read N- to C-terminus: Cytochrome P450 6B7 (504 aa).

Residue Cys445 coordinates heme.

This sequence belongs to the cytochrome P450 family. The cofactor is heme.

Its subcellular location is the endoplasmic reticulum membrane. The protein resides in the microsome membrane. It carries out the reaction an organic molecule + reduced [NADPH--hemoprotein reductase] + O2 = an alcohol + oxidized [NADPH--hemoprotein reductase] + H2O + H(+). The polypeptide is Cytochrome P450 6B7 (CYP6B7) (Helicoverpa armigera (Cotton bollworm)).